We begin with the raw amino-acid sequence, 875 residues long: Leucine--tRNA ligase (875 aa).

Residues 1–20 (MPSAGSVNAANPAVDTSAQT) show a composition bias toward polar residues. Residues 1-22 (MPSAGSVNAANPAVDTSAQTGR) form a disordered region. The short motif at 60 to 70 (PYPSGSLHMGH) is the 'HIGH' region element. Residues 634–638 (KMSKS) carry the 'KMSKS' region motif. An ATP-binding site is contributed by Lys637.

This sequence belongs to the class-I aminoacyl-tRNA synthetase family.

It localises to the cytoplasm. It catalyses the reaction tRNA(Leu) + L-leucine + ATP = L-leucyl-tRNA(Leu) + AMP + diphosphate. This chain is Leucine--tRNA ligase, found in Synechococcus sp. (strain CC9605).